We begin with the raw amino-acid sequence, 863 residues long: MQELTPMMQQYMEIKQRVKDCILFFRLGDFYEMFFDDAIIASKELEIALTARDCGNNEKAPMCGVPYHSAHSYIAKLIEKGYKVAICEQVEDPKLAKGVVKREITRIITPGTFIDENFSKANNFICCVARVESDFALTFVDISTGEMYACLIENDIQKMINEISKYAPSEILISHLDNELYEVIRENYNSFVQRIEFIEIDRCYDLIDKQMQITNINDKVALSVGNLLNYLVDTQKISFNYIKKFEFYRVQNYLQIDLSTKRNLELTESIIARSKKNSLFGILDQAKTSMGSRLIKKWLERPLIDVVEINRRLDAVEELYNNFPLLMQIEGLLEGIYDIERLSSKFAYKSINAKDLLSLKKSIEVLPRLKELLGEFKSPLLKELYNELDTLEDVYSLIDSSINEDAPVGLKEGGIIKDGFNDHVDRLRNISKNSKELLIQYEEKERNLTGIKNLKIGYNKVFGYYIEVTKSNYSLVPERYIRKQTLANAERYVTEELKKLEDEIINAEQKLVELEYELFCQIRDKIESQIERIQKTASCIAIIDALCSFAHIAIDNRYTKPIVYLGDRIYIKNGRHPVVEKMIGYSNFVPNDTELDNDQNRVLIITGPNMAGKSTYMRQVALIVIMAQMGCFVPAEEAQIGIVDKIFSRIGASDDISSGQSTFMVEMSEVANILKNATPKSLIIFDEVGRGTSTYDGLSIAWAVLEFVADKSKIGAKTLFATHYHELTELEEKISGVKNYRVDVKEEGKNIIFLRKIVRGGCDSSYGIHVARLAGIPEEVLQRAEQILKKLEEADINRKEAKRLRKEIKREFTEQIEFFSYKKDEIIEKIENLDILNITPIQALNILSELKHEIIKAKERQLL.

Residue 607–614 (GPNMAGKS) coordinates ATP.

It belongs to the DNA mismatch repair MutS family.

In terms of biological role, this protein is involved in the repair of mismatches in DNA. It is possible that it carries out the mismatch recognition step. This protein has a weak ATPase activity. The chain is DNA mismatch repair protein MutS from Caldicellulosiruptor saccharolyticus (strain ATCC 43494 / DSM 8903 / Tp8T 6331).